A 190-amino-acid polypeptide reads, in one-letter code: MALRGHPEPQPTNTPLSATVGGPISLFTQPRCHSAARDLVWSQAWPDPDVLEISMQTPGGSSCRKEAVLPRLRVTRPLVPEPAILPVCAARLAGSLATDLSRSHSLLPPWVDLKEPPPPSAPSLLLEDPGQGGCHGAQSCVGTCELANGARGFCPEMGQNESLSEERKGHESKRKSGGRGSPSSHPTQAS.

Disordered stretches follow at residues 1–21 (MALRGHPEPQPTNTPLSATVG) and 155–190 (PEMGQNESLSEERKGHESKRKSGGRGSPSSHPTQAS). Residues 181–190 (SPSSHPTQAS) show a composition bias toward low complexity.

This is an uncharacterized protein from Homo sapiens (Human).